Reading from the N-terminus, the 579-residue chain is Folliculin (579 aa).

The interval 31 to 82 (QGAGSGDSPDQVEQAEEEEGGIQMSSRVRAHSPAEGASSESSSPGPKKSDMC) is disordered. Residues S62 and S73 each carry the phosphoserine modification. Residues 63–76 (PAEGASSESSSPGP) are compositionally biased toward low complexity. Residues 86 to 242 (RSLAVGHPGY…RNGNAARSLT (157 aa)) enclose the uDENN FLCN/SMCR8-type domain. The stretch at 287 to 310 (EKLADLEEESESWDNSEAEEEEKA) forms a coiled coil. The segment covering 294-308 (EESESWDNSEAEEEE) has biased composition (acidic residues). The segment at 294 to 323 (EESESWDNSEAEEEEKAPVTPEGAEGRELT) is disordered. Phosphoserine occurs at positions 302, 406, 537, 542, and 571. The cDENN FLCN/SMCR8-type domain occupies 339-491 (QPPKLTGFKS…ILNKIEAALT (153 aa)). The dDENN FLCN/SMCR8-type domain maps to 493 to 558 (QNLSVDVVDQ…LLKFWMTGLS (66 aa)).

The protein belongs to the folliculin family. As to quaternary structure, interacts (via C-terminus) with FNIP1 or FNIP2 (via C-terminus). Component of the lysosomal folliculin complex (LFC), composed of FLCN, FNIP1 (or FNIP2), RagA/RRAGA or RagB/RRAGB GDP-bound, RagC/RRAGC or RagD/RRAGD GTP-bound, and Ragulator. Interaction with FNIP1 or FNIP2 mediates indirect interaction with the PRKAA1, PRKAB1 and PRKAG1 subunits of 5'-AMP-activated protein kinase (AMPK). Interacts with HSP90AA1 in the presence of FNIP1. Interacts with HSP70, STUB1, CDC37, AHSA1, CCT2, STIP1, PTGES3 and PPP5C. Interacts with GABARAP; interaction takes place in the presence of FNIP1 and/or FNIP2. Interacts with RILP; the interaction is direct and promotes association between RILP and RAB34. Interacts with KIF3A and KIF3B. Interacts with lactate dehydrogenase LDHA, but not LDHB; the interaction is direct, may preferentially bind LDHA dimers rather than tetramers, and regulates LDHA activity, acting as an uncompetitive inhibitor. In terms of processing, phosphorylation by ULK1 modulates the interaction with GABARAP and is required to regulate autophagy. In terms of tissue distribution, highly expressed in adult heart, pancreas, and prostate with moderate expression in adult brain, kidney, liver, adipose tissue and lung.

The protein resides in the lysosome membrane. It is found in the cytoplasm. Its subcellular location is the cytosol. It localises to the cell projection. The protein localises to the cilium. The protein resides in the cytoskeleton. It is found in the microtubule organizing center. Its subcellular location is the centrosome. It localises to the spindle. The protein localises to the nucleus. With respect to regulation, GTPase-activating activity is inhibited in the folliculin complex (LFC), which stabilizes the GDP-bound state of RagA/RRAGA (or RagB/RRAGB), because Arg-164 is located far from the RagC/RRAGC or RagD/RRAGD nucleotide pocket. Disassembly of the LFC complex upon amino acid restimulation liberates the GTPase-activating activity. Functionally, multi-functional protein, involved in both the cellular response to amino acid availability and in the regulation of glycolysis. GTPase-activating protein that plays a key role in the cellular response to amino acid availability through regulation of the non-canonical mTORC1 signaling cascade controlling the MiT/TFE factors TFEB and TFE3. Activates mTORC1 by acting as a GTPase-activating protein: specifically stimulates GTP hydrolysis by RagC/RRAGC or RagD/RRAGD, promoting the conversion to the GDP-bound state of RagC/RRAGC or RagD/RRAGD, and thereby activating the kinase activity of mTORC1. The GTPase-activating activity is inhibited during starvation and activated in presence of nutrients. Acts as a key component for non-canonical mTORC1-dependent control of the MiT/TFE factors TFEB and TFE3, while it is not involved in mTORC1-dependent phosphorylation of canonical RPS6KB1/S6K1 and EIF4EBP1/4E-BP1. In low-amino acid conditions, the lysosomal folliculin complex (LFC) is formed on the membrane of lysosomes, which inhibits the GTPase-activating activity of FLCN, inactivates mTORC1 and maximizes nuclear translocation of TFEB and TFE3. Upon amino acid restimulation, RagA/RRAGA (or RagB/RRAGB) nucleotide exchange promotes disassembly of the LFC complex and liberates the GTPase-activating activity of FLCN, leading to activation of mTORC1 and subsequent cytoplasmic retention of TFEB and TFE3. Indirectly acts as a positive regulator of Wnt signaling by promoting mTOR-dependent cytoplasmic retention of MiT/TFE factor TFE3. Required for the exit of hematopoietic stem cell from pluripotency by promoting mTOR-dependent cytoplasmic retention of TFE3, thereby increasing Wnt signaling. Involved in the control of embryonic stem cells differentiation; together with LAMTOR1 it is necessary to recruit and activate RagC/RRAGC and RagD/RRAGD at the lysosomes, and to induce exit of embryonic stem cells from pluripotency via non-canonical, mTOR-independent TFE3 inactivation. Acts as an inhibitor of browning of adipose tissue by regulating mTOR-dependent cytoplasmic retention of TFE3. In response to flow stress, regulates STK11/LKB1 accumulation and mTORC1 activation through primary cilia: may act by recruiting STK11/LKB1 to primary cilia for activation of AMPK resided at basal bodies, causing mTORC1 down-regulation. Together with FNIP1 and/or FNIP2, regulates autophagy: following phosphorylation by ULK1, interacts with GABARAP and promotes autophagy. Required for starvation-induced perinuclear clustering of lysosomes by promoting association of RILP with its effector RAB34. Regulates glycolysis by binding to lactate dehydrogenase LDHA, acting as an uncompetitive inhibitor. The sequence is that of Folliculin from Mus musculus (Mouse).